The chain runs to 148 residues: Lysozyme-like protein 6 (148 aa).

The first 19 residues, 1–19, serve as a signal peptide directing secretion; sequence MTKALLIYLVSSFLALNQA. Positions 20 to 148 constitute a C-type lysozyme domain; that stretch reads SLISRCDLAQ…FYWLTGCRLR (129 aa). 4 disulfide bridges follow: C25–C145, C49–C133, C83–C98, and C94–C112. Active-site residues include E54 and D71.

It belongs to the glycosyl hydrolase 22 family. Monomer. In terms of tissue distribution, expressed in testis, epididymis and spermatozoa (at protein level). Expressed in late-stage spermatocytes and round spermatids.

The protein localises to the secreted. Its subcellular location is the cell surface. It is found in the cell projection. It localises to the cilium. The protein resides in the flagellum. The enzyme catalyses Hydrolysis of (1-&gt;4)-beta-linkages between N-acetylmuramic acid and N-acetyl-D-glucosamine residues in a peptidoglycan and between N-acetyl-D-glucosamine residues in chitodextrins.. Its function is as follows. May be involved sperm-egg plasma membrane adhesion and fusion during fertilization. Exhibits bacteriolytic activity in vitro against Micrococcus luteus and Staphylococcus aureus. Shows weak bacteriolytic activity against Gram-positive bacteria at physiological pH. Bacteriolytic activity is pH-dependent, with a maximum at around pH 5.6. This chain is Lysozyme-like protein 6 (LYZL6), found in Homo sapiens (Human).